A 282-amino-acid polypeptide reads, in one-letter code: Dof zinc finger protein 4 (282 aa).

The Dof-type zinc-finger motif lies at 45-99 (VKCPRCESTNTKFCYYNNYNLSQPRHFCKSCRRYWTKGGVLRNVPVGGGCRKTKR). Zn(2+)-binding residues include cysteine 47, cysteine 50, cysteine 72, and cysteine 75. The interval 89–161 (PVGGGCRKTK…TTPATPSSNT (73 aa)) is disordered. Composition is skewed to low complexity over residues 102–117 (SSSAASSAPSTPTAAT) and 125–161 (RASASSPRSSSGGSGNTSPTAAAATTPTTPATPSSNT).

It localises to the nucleus. In terms of biological role, transcription factor that may transactivate seed storage protein genes in developing seeds. This Oryza sativa subsp. japonica (Rice) protein is Dof zinc finger protein 4.